The primary structure comprises 159 residues: Immunoglobulin J chain (159 aa).

An N-terminal signal peptide occupies residues 1–21 (MKTHLLLWGVLAIFVKAVLVT). Cystine bridges form between Cys-34-Cys-123, Cys-93-Cys-113, and Cys-131-Cys-156. A glycan (N-linked (GlcNAc...) (complex) asparagine) is linked at Asn-70.

In terms of assembly, part of the secretory IgA (sIgA) complex that consists of two, four or five IgA monomers, and two additional non-Ig polypeptides, namely the JCHAIN and the secretory component (the proteolytic product of PIGR). Part of the secretory IgM (sIgM) complex that consist of five IgM monomers, and two additional non-Ig polypeptides, namely the JCHAIN and the secretory component (the proteolytic product of PIGR). JCHAIN-containing IgM interacts (via CH4 domain) with FCRM (via Ig-like domain).

Its subcellular location is the secreted. Serves to link two monomer units of either IgM or IgA. In the case of IgM, the J chain-joined dimer is a nucleating unit for the IgM pentamer, and in the case of IgA it induces dimers and/or larger polymers. It also helps to bind these immunoglobulins to secretory component. In Mus musculus (Mouse), this protein is Immunoglobulin J chain.